A 20-amino-acid polypeptide reads, in one-letter code: Punein (20 aa).

One can recognise a Barwin domain in the interval 1-20 (YHYYNPEENHFCATWDASKP).

Post-translationally, the N-terminus is blocked.

This Punica granatum (Pomegranate) protein is Punein.